Reading from the N-terminus, the 201-residue chain is Large ribosomal subunit protein eL15A (201 aa).

Positions 161–182 are disordered; sequence SRGLTSIGKKSRGIGKGHRFNN. Residues 169–179 are compositionally biased toward basic residues; sequence KKSRGIGKGHR.

This sequence belongs to the eukaryotic ribosomal protein eL15 family. Component of the large ribosomal subunit (LSU). Mature yeast ribosomes consist of a small (40S) and a large (60S) subunit. The 40S small subunit contains 1 molecule of ribosomal RNA (18S rRNA) and at least 33 different proteins. The large 60S subunit contains 3 rRNA molecules (25S, 5.8S and 5S rRNA) and at least 46 different proteins.

It is found in the cytoplasm. The protein resides in the nucleus. It localises to the nucleolus. Functionally, component of the ribosome, a large ribonucleoprotein complex responsible for the synthesis of proteins in the cell. The small ribosomal subunit (SSU) binds messenger RNAs (mRNAs) and translates the encoded message by selecting cognate aminoacyl-transfer RNA (tRNA) molecules. The large subunit (LSU) contains the ribosomal catalytic site termed the peptidyl transferase center (PTC), which catalyzes the formation of peptide bonds, thereby polymerizing the amino acids delivered by tRNAs into a polypeptide chain. The nascent polypeptides leave the ribosome through a tunnel in the LSU and interact with protein factors that function in enzymatic processing, targeting, and the membrane insertion of nascent chains at the exit of the ribosomal tunnel. The chain is Large ribosomal subunit protein eL15A (rpl15) from Schizosaccharomyces pombe (strain 972 / ATCC 24843) (Fission yeast).